Consider the following 365-residue polypeptide: tRNA/tmRNA (uracil-C(5))-methyltransferase (365 aa).

The S-adenosyl-L-methionine site is built by Gln189, Tyr217, Asn222, Glu238, and Asp298. The active-site Nucleophile is Cys323. Glu357 serves as the catalytic Proton acceptor.

It belongs to the class I-like SAM-binding methyltransferase superfamily. RNA M5U methyltransferase family. TrmA subfamily.

The catalysed reaction is uridine(54) in tRNA + S-adenosyl-L-methionine = 5-methyluridine(54) in tRNA + S-adenosyl-L-homocysteine + H(+). It catalyses the reaction uridine(341) in tmRNA + S-adenosyl-L-methionine = 5-methyluridine(341) in tmRNA + S-adenosyl-L-homocysteine + H(+). In terms of biological role, dual-specificity methyltransferase that catalyzes the formation of 5-methyluridine at position 54 (m5U54) in all tRNAs, and that of position 341 (m5U341) in tmRNA (transfer-mRNA). The protein is tRNA/tmRNA (uracil-C(5))-methyltransferase of Shewanella sediminis (strain HAW-EB3).